The chain runs to 164 residues: Endoribonuclease YbeY (164 aa).

Zn(2+) is bound by residues histidine 132, histidine 136, and histidine 142.

This sequence belongs to the endoribonuclease YbeY family. Requires Zn(2+) as cofactor.

It localises to the cytoplasm. Functionally, single strand-specific metallo-endoribonuclease involved in late-stage 70S ribosome quality control and in maturation of the 3' terminus of the 16S rRNA. The protein is Endoribonuclease YbeY of Clostridium kluyveri (strain NBRC 12016).